The following is a 91-amino-acid chain: DNA/RNA-binding protein Alba (91 aa).

The protein belongs to the histone-like Alba family.

It is found in the cytoplasm. The protein resides in the chromosome. Binds double-stranded DNA tightly but without sequence specificity. Involved in DNA compaction. The chain is DNA/RNA-binding protein Alba from Methanoculleus marisnigri (strain ATCC 35101 / DSM 1498 / JR1).